The chain runs to 440 residues: Trigger factor (440 aa).

In terms of domain architecture, PPIase FKBP-type spans 163 to 248 (GDILTVDFLG…AKALKRRVAP (86 aa)).

This sequence belongs to the FKBP-type PPIase family. Tig subfamily.

Its subcellular location is the cytoplasm. The enzyme catalyses [protein]-peptidylproline (omega=180) = [protein]-peptidylproline (omega=0). Functionally, involved in protein export. Acts as a chaperone by maintaining the newly synthesized protein in an open conformation. Functions as a peptidyl-prolyl cis-trans isomerase. This chain is Trigger factor, found in Acidiphilium cryptum (strain JF-5).